We begin with the raw amino-acid sequence, 496 residues long: Probable histidine ammonia-lyase (496 aa).

A cross-link (5-imidazolinone (Ala-Gly)) is located at residues 141 to 143 (ASG). At Ser142 the chain carries 2,3-didehydroalanine (Ser).

This sequence belongs to the PAL/histidase family. Contains an active site 4-methylidene-imidazol-5-one (MIO), which is formed autocatalytically by cyclization and dehydration of residues Ala-Ser-Gly.

It localises to the cytoplasm. It catalyses the reaction L-histidine = trans-urocanate + NH4(+). It functions in the pathway amino-acid degradation; L-histidine degradation into L-glutamate; N-formimidoyl-L-glutamate from L-histidine: step 1/3. This is Probable histidine ammonia-lyase from Thermoplasma acidophilum (strain ATCC 25905 / DSM 1728 / JCM 9062 / NBRC 15155 / AMRC-C165).